Consider the following 477-residue polypeptide: Methylenetetrahydrofolate--tRNA-(uracil-5-)-methyltransferase TrmFO (477 aa).

14–19 (GGGLAG) is an FAD binding site.

Belongs to the MnmG family. TrmFO subfamily. FAD is required as a cofactor.

The protein resides in the cytoplasm. The enzyme catalyses uridine(54) in tRNA + (6R)-5,10-methylene-5,6,7,8-tetrahydrofolate + NADH + H(+) = 5-methyluridine(54) in tRNA + (6S)-5,6,7,8-tetrahydrofolate + NAD(+). It catalyses the reaction uridine(54) in tRNA + (6R)-5,10-methylene-5,6,7,8-tetrahydrofolate + NADPH + H(+) = 5-methyluridine(54) in tRNA + (6S)-5,6,7,8-tetrahydrofolate + NADP(+). In terms of biological role, catalyzes the folate-dependent formation of 5-methyl-uridine at position 54 (M-5-U54) in all tRNAs. This chain is Methylenetetrahydrofolate--tRNA-(uracil-5-)-methyltransferase TrmFO, found in Rhizobium etli (strain ATCC 51251 / DSM 11541 / JCM 21823 / NBRC 15573 / CFN 42).